A 320-amino-acid polypeptide reads, in one-letter code: Probable L,D-transpeptidase YcfS (320 aa).

The first 23 residues, 1–23 (MMIKTRFSRWLTFFTFAAAVALA), serve as a signal peptide directing secretion. The region spanning 45–90 (KFHVVENDGGSLEAIAKKYNVGFLALLQANPGVDPYVPRAGSVLTI) is the LysM domain. The L,D-TPase catalytic domain occupies 102–241 (EGIVINIAEL…VTPGTKVNII (140 aa)). His201 (proton donor/acceptor) is an active-site residue. Cys217 functions as the Nucleophile in the catalytic mechanism.

Belongs to the YkuD family. In terms of assembly, interacts with DsbG.

It localises to the periplasm. It functions in the pathway cell wall biogenesis; peptidoglycan biosynthesis. Functionally, responsible, at least in part, for anchoring of the major outer membrane lipoprotein (Lpp, also known as the Braun lipoprotein) to the peptidoglycan via a meso-diaminopimelyl-L-Lys- bond on the terminal residue of Lpp. This chain is Probable L,D-transpeptidase YcfS (ycfS), found in Escherichia coli (strain K12).